Consider the following 140-residue polypeptide: PDZ domain-containing protein 11 (140 aa).

A PDZ domain is found at Thr-47 to Tyr-129.

As to quaternary structure, interacts with ATP2B1, ATP2B2, ATP2B3, ATP2B4 and ATP7A. Interacts with PLEKHA7 (via WW domains) at zonula adherens; this interaction is essential for the interaction between PLEKHA7 and the ADAM10-binding protein TSPAN33. Interacts with SLC5A6. Widely expressed (at protein level).

Its subcellular location is the secreted. The protein resides in the cytoplasm. It is found in the cell junction. The protein localises to the adherens junction. It localises to the cell membrane. In terms of biological role, mediates docking of ADAM10 to zonula adherens by interacting with PLEKHA7 which is required for PLEKHA7 to interact with the ADAM10-binding protein TSPAN33. In Homo sapiens (Human), this protein is PDZ domain-containing protein 11 (PDZD11).